Here is a 140-residue protein sequence, read N- to C-terminus: Biopolymer transport protein exbD1 (140 aa).

The Cytoplasmic segment spans residues 1–16 (MAFSSGNSGGPMADIN). A helical membrane pass occupies residues 17–37 (VTPLVDVMLVLLIIFIITAPL). The Periplasmic portion of the chain corresponds to 38 to 140 (MSHKVKVELP…GFVATKEKGQ (103 aa)).

This sequence belongs to the ExbD/TolR family. As to quaternary structure, the accessory proteins ExbB and ExbD seem to form a complex with TonB.

It localises to the cell inner membrane. Its function is as follows. Involved in the TonB-dependent energy-dependent transport of various receptor-bound substrates. This is Biopolymer transport protein exbD1 (exbD1) from Xanthomonas campestris pv. campestris (strain B100).